A 583-amino-acid polypeptide reads, in one-letter code: Pectinesterase/pectinesterase inhibitor U1 (583 aa).

A signal peptide spans 1–40 (MTRVEDFFSKQIDFCKRKKKIYLAIVASVLLVAAVIGVVA). The tract at residues 60-221 (SSAHAIVKSA…EKMCSNALAM (162 aa)) is pectinesterase inhibitor U1. Asn85, Asn105, and Asn224 each carry an N-linked (GlcNAc...) asparagine glycan. The tract at residues 272 to 570 (DVVVAADGSG…TPGRFIAGGS (299 aa)) is pectinesterase U1. The substrate site is built by Thr347 and Gln377. The Proton donor; for pectinesterase activity role is filled by Asp400. Cys414 and Cys434 are joined by a disulfide. Asp421 functions as the Nucleophile; for pectinesterase activity in the catalytic mechanism. The substrate site is built by Arg489 and Trp491.

In the N-terminal section; belongs to the PMEI family. The protein in the C-terminal section; belongs to the pectinesterase family.

It localises to the secreted. Its subcellular location is the cell wall. It catalyses the reaction [(1-&gt;4)-alpha-D-galacturonosyl methyl ester](n) + n H2O = [(1-&gt;4)-alpha-D-galacturonosyl](n) + n methanol + n H(+). Its pathway is glycan metabolism; pectin degradation; 2-dehydro-3-deoxy-D-gluconate from pectin: step 1/5. Its function is as follows. Acts in the modification of cell walls via demethylesterification of cell wall pectin. This Solanum lycopersicum (Tomato) protein is Pectinesterase/pectinesterase inhibitor U1 (PMEU1).